We begin with the raw amino-acid sequence, 397 residues long: Elongation factor Tu-1 (397 aa).

A tr-type G domain is found at Lys-10–Glu-206. Residues Gly-19–Thr-26 are G1. A GTP-binding site is contributed by Gly-19–Thr-26. Thr-26 is a binding site for Mg(2+). The G2 stretch occupies residues Gly-62–Ser-66. Positions Asp-83–Gly-86 are G3. GTP contacts are provided by residues Asp-83 to His-87 and Asn-138 to Asp-141. The interval Asn-138 to Asp-141 is G4. Residues Ser-176–Leu-178 are G5.

This sequence belongs to the TRAFAC class translation factor GTPase superfamily. Classic translation factor GTPase family. EF-Tu/EF-1A subfamily. As to quaternary structure, monomer.

Its subcellular location is the cytoplasm. It carries out the reaction GTP + H2O = GDP + phosphate + H(+). GTP hydrolase that promotes the GTP-dependent binding of aminoacyl-tRNA to the A-site of ribosomes during protein biosynthesis. In Streptomyces coelicolor (strain ATCC BAA-471 / A3(2) / M145), this protein is Elongation factor Tu-1.